Consider the following 1123-residue polypeptide: Leucine-rich repeat receptor-like protein kinase PEPR1 (1123 aa).

The first 28 residues, 1 to 28 (MKNLGGLFKILLLFFCLFLSTHIISVSC), serve as a signal peptide directing secretion. Topologically, residues 29–769 (LNSDGLTLLS…SRKSGLSTWQ (741 aa)) are extracellular. One copy of the LRR 1 repeat lies at 31-53 (SDGLTLLSLLKHLDRVPPQVTST). Residues N57, N81, N110, and N121 are each glycosylated (N-linked (GlcNAc...) asparagine). LRR repeat units follow at residues 74–98 (SKNVASLNFTRSRVSGQLGPEIGEL), 99–122 (KSLQILDLSTNNFSGTIPSTLGNC), 124–145 (KLATLDLSENGFSDKIPDTLDS), 146–170 (LKRLEVLYLYINFLTGELPESLFRI), 171–194 (PKLQVLYLDYNNLTGPIPQSIGDA), 196–218 (ELVELSMYANQFSGNIPESIGNS), and 219–243 (SSLQILYLHRNKLVGSLPESLNLLG). N-linked (GlcNAc...) asparagine glycans are attached at residues N182 and N217. 7 N-linked (GlcNAc...) asparagine glycosylation sites follow: N244, N252, N289, N302, N316, N321, and N337. LRR repeat units lie at residues 245–266 (LTTLFVGNNSLQGPVRFGSPNC), 267–290 (KNLLTLDLSYNEFEGGVPPALGNC), 292–314 (SLDALVIVSGNLSGTIPSSLGML), 315–338 (KNLTILNLSENRLSGSIPAELGNC), 340–362 (SLNLLKLNDNQLVGGIPSALGKL), 363–386 (RKLESLELFENRFSGEIPIEIWKS), 388–410 (SLTQLLVYQNNLTGELPVEMTEM), 412–434 (KLKIATLFNNSFYGAIPPGLGVN), 435–458 (SSLEEVDFIGNKLTGEIPPNLCHG), 459–482 (RKLRILNLGSNLLHGTIPASIGHC), 484–505 (TIRRFILRENNLSGLLPEFSQD), 506–529 (HSLSFLDFNSNNFEGPIPGSLGSC), 530–553 (KNLSSINLSRNRFTGQIPPQLGNL), 554–577 (QNLGYMNLSRNLLEGSLPAQLSNC), 579–600 (SLERFDVGFNSLNGSVPSNFSN), 601–625 (WKGLTTLVLSENRFSGGIPQFLPEL), 626–650 (KKLSTLQIARNAFGGEIPSSIGLIE), 652–674 (LIYDLDLSGNGLTGEIPAKLGDL), 675–696 (IKLTRLNISNNNLTGSLSVLKG), and 697–721 (LTSLLHVDVSNNQFTGPIPDNLEGQ). N-linked (GlcNAc...) asparagine glycans are attached at residues N398, N420, and N434. N-linked (GlcNAc...) asparagine glycosylation occurs at N494. N-linked (GlcNAc...) asparagine glycans are attached at residues N531, N536, N560, N591, and N597. N681 and N686 each carry an N-linked (GlcNAc...) asparagine glycan. N745 carries an N-linked (GlcNAc...) asparagine glycan. Residues 770–790 (IVLIAVLSSLLVLVVVLALVF) traverse the membrane as a helical segment. At 791–1123 (ICLRRRKGRP…ARSCSSDSVR (333 aa)) the chain is on the cytoplasmic side. Position 824 is a phosphothreonine (T824). Residues 827–1115 (LNEKYTIGRG…LLEDVKHLAR (289 aa)) enclose the Protein kinase domain. ATP contacts are provided by residues 833–841 (IGRGAHGIV) and K855. Phosphotyrosine is present on residues Y901 and Y941. The active-site Proton acceptor is D954. Position 995 is a phosphotyrosine (Y995).

This sequence belongs to the protein kinase superfamily. Ser/Thr protein kinase family. In terms of assembly, interacts with PEP1 and BAK1. Interacts with BIK1 and PBL1. N-glycosylated.

The protein localises to the cell membrane. It carries out the reaction L-seryl-[protein] + ATP = O-phospho-L-seryl-[protein] + ADP + H(+). It catalyses the reaction L-threonyl-[protein] + ATP = O-phospho-L-threonyl-[protein] + ADP + H(+). Its function is as follows. Acts as a receptor for PEP defense peptides. Unlike typical immune receptors, senses an endogenous elicitor that potentiates pathogen-associated molecular pattern (PAMP)-inducible plant responses. Involved in PAMP-triggered immunity (PTI) signaling. Interacts with and phosphorylates the kinase BIK1, a central rate-limiting kinase in PTI signaling. The sequence is that of Leucine-rich repeat receptor-like protein kinase PEPR1 (PEPR1) from Arabidopsis thaliana (Mouse-ear cress).